We begin with the raw amino-acid sequence, 93 residues long: Small ribosomal subunit protein uS19c (93 aa).

This sequence belongs to the universal ribosomal protein uS19 family.

Its subcellular location is the plastid. The protein resides in the chloroplast. Its function is as follows. Protein S19 forms a complex with S13 that binds strongly to the 16S ribosomal RNA. This is Small ribosomal subunit protein uS19c from Lolium perenne (Perennial ryegrass).